We begin with the raw amino-acid sequence, 505 residues long: Putative heat shock protein HSP 90-beta 4 (505 aa).

The ATP site is built by Asn-22, Lys-83, and Phe-109. The tract at residues 197 to 248 is disordered; sequence EKEISDDEEEKGEKEEEDKDDKEKPKTEDVGSDEEDDTDKNNKKKTKKIKEK. The span at 200-216 shows a compositional bias: acidic residues; that stretch reads ISDDEEEKGEKEEEDKD.

This sequence belongs to the heat shock protein 90 family. In terms of assembly, homodimer.

It localises to the cytoplasm. Functionally, putative molecular chaperone that may promote the maturation, structural maintenance and proper regulation of specific target proteins. In Homo sapiens (Human), this protein is Putative heat shock protein HSP 90-beta 4 (HSP90AB4P).